Consider the following 350-residue polypeptide: Probable arabinogalactan endo-beta-1,4-galactanase A (350 aa).

An N-terminal signal peptide occupies residues 1–16; sequence MIYSLLLSALPLLSSA. The N-linked (GlcNAc...) asparagine glycan is linked to N128. Residue E152 is the Proton donor of the active site. The active-site Nucleophile is E262.

The protein belongs to the glycosyl hydrolase 53 family.

Its subcellular location is the secreted. It carries out the reaction The enzyme specifically hydrolyzes (1-&gt;4)-beta-D-galactosidic linkages in type I arabinogalactans.. In terms of biological role, endogalactanase involved in the degradation of plant cell wall polysaccharides, and more particularly of hairy regions of pectin. The chain is Probable arabinogalactan endo-beta-1,4-galactanase A (galA) from Aspergillus niger (strain ATCC MYA-4892 / CBS 513.88 / FGSC A1513).